A 96-amino-acid polypeptide reads, in one-letter code: UPF0235 protein VC_0458 (96 aa).

The protein belongs to the UPF0235 family.

The protein is UPF0235 protein VC_0458 of Vibrio cholerae serotype O1 (strain ATCC 39315 / El Tor Inaba N16961).